The following is an 81-amino-acid chain: Small ribosomal subunit protein uS17 (81 aa).

The protein belongs to the universal ribosomal protein uS17 family. Part of the 30S ribosomal subunit.

Its function is as follows. One of the primary rRNA binding proteins, it binds specifically to the 5'-end of 16S ribosomal RNA. This Methylocella silvestris (strain DSM 15510 / CIP 108128 / LMG 27833 / NCIMB 13906 / BL2) protein is Small ribosomal subunit protein uS17.